Here is a 228-residue protein sequence, read N- to C-terminus: Urease accessory protein UreF 1 (228 aa).

It belongs to the UreF family. UreD, UreF and UreG form a complex that acts as a GTP-hydrolysis-dependent molecular chaperone, activating the urease apoprotein by helping to assemble the nickel containing metallocenter of UreC. The UreE protein probably delivers the nickel.

It is found in the cytoplasm. Functionally, required for maturation of urease via the functional incorporation of the urease nickel metallocenter. The chain is Urease accessory protein UreF 1 from Brucella anthropi (strain ATCC 49188 / DSM 6882 / CCUG 24695 / JCM 21032 / LMG 3331 / NBRC 15819 / NCTC 12168 / Alc 37) (Ochrobactrum anthropi).